The chain runs to 84 residues: Mitochondrial import inner membrane translocase subunit tim9 (84 aa).

The Twin CX3C motif signature appears at 35–59 (CFSDCVQDFTSSKLSNKESECIAKC). Disulfide bonds link Cys-35/Cys-59 and Cys-39/Cys-55.

Belongs to the small Tim family. As to quaternary structure, heterohexamer; composed of 3 copies of TIM9 and 3 copies of TIM10, named soluble 70 kDa complex. Associates with the TIM22 complex, whose core is composed of TIM22 and TIM54. Interacts with the transmembrane regions of multi-pass transmembrane proteins in transit.

Its subcellular location is the mitochondrion inner membrane. Mitochondrial intermembrane chaperone that participates in the import and insertion of multi-pass transmembrane proteins into the mitochondrial inner membrane. Also required for the transfer of beta-barrel precursors from the TOM complex to the sorting and assembly machinery (SAM complex) of the outer membrane. Acts as a chaperone-like protein that protects the hydrophobic precursors from aggregation and guide them through the mitochondrial intermembrane space. The protein is Mitochondrial import inner membrane translocase subunit tim9 (tim9) of Schizosaccharomyces pombe (strain 972 / ATCC 24843) (Fission yeast).